The sequence spans 188 residues: Apolipoprotein M (188 aa).

Positions 1-22 (MFHQIWAALLYFYGIILNSIYQ) form a signal peptide, not cleaved. 3 disulfide bridges follow: Cys-23-Cys-167, Cys-95-Cys-183, and Cys-128-Cys-157. N-linked (GlcNAc...) asparagine glycosylation occurs at Asn-135. The tetradecanoate site is built by Glu-136 and Arg-143.

This sequence belongs to the calycin superfamily. Lipocalin family. Highly divergent. In terms of assembly, interacts with LRP2; LRP2 mediates APOM renal uptake and subsequent lysosomal degradation.

It is found in the secreted. Its function is as follows. Probably involved in lipid transport. Can bind sphingosine-1-phosphate, myristic acid, palmitic acid and stearic acid, retinol, all-trans-retinoic acid and 9-cis-retinoic acid. The chain is Apolipoprotein M (APOM) from Pongo abelii (Sumatran orangutan).